Reading from the N-terminus, the 461-residue chain is Photosystem II CP43 reaction center protein (461 aa).

Positions 1-2 (ME) are excised as a propeptide. An N-acetylthreonine modification is found at Thr-3. Position 3 is a phosphothreonine (Thr-3). 5 helical membrane-spanning segments follow: residues 57 to 81 (LFEVSHFVPEKPMYEQGLILLPHIA), 122 to 143 (LIGPETLEESFPFFGYIWKDKN), 166 to 188 (KAMYFGGIYDTWAPGGGDVRIIT), 243 to 263 (TPWPWARRAFVWSGEAYLSYS), and 279 to 300 (WFNNTAYPSEFYGPTGPEASQA). Glu-355 contributes to the [CaMn4O5] cluster binding site. Residues 435–459 (RARAAAAGFEKGIDRVDEPVLSMRP) form a helical membrane-spanning segment.

The protein belongs to the PsbB/PsbC family. PsbC subfamily. PSII is composed of 1 copy each of membrane proteins PsbA, PsbB, PsbC, PsbD, PsbE, PsbF, PsbH, PsbI, PsbJ, PsbK, PsbL, PsbM, PsbT, PsbX, PsbY, PsbZ, Psb30/Ycf12, at least 3 peripheral proteins of the oxygen-evolving complex and a large number of cofactors. It forms dimeric complexes. It depends on Binds multiple chlorophylls and provides some of the ligands for the Ca-4Mn-5O cluster of the oxygen-evolving complex. It may also provide a ligand for a Cl- that is required for oxygen evolution. PSII binds additional chlorophylls, carotenoids and specific lipids. as a cofactor.

Its subcellular location is the plastid. The protein resides in the chloroplast thylakoid membrane. Its function is as follows. One of the components of the core complex of photosystem II (PSII). It binds chlorophyll and helps catalyze the primary light-induced photochemical processes of PSII. PSII is a light-driven water:plastoquinone oxidoreductase, using light energy to abstract electrons from H(2)O, generating O(2) and a proton gradient subsequently used for ATP formation. The chain is Photosystem II CP43 reaction center protein from Chlamydomonas moewusii (Chlamydomonas eugametos).